Consider the following 129-residue polypeptide: Selenoprotein M (129 aa).

The first 19 residues, 1–19, serve as a signal peptide directing secretion; that stretch reads MARGLAVFFLLAGACLALA. Active-site nucleophile residues include Cys-35 and Sec-38. Sec-38 is a non-standard amino acid (selenocysteine). The segment at 107–129 is disordered; it reads KSSKDEQVPEEYQEGPYMEKEEL. The Prevents secretion from ER motif lies at 126 to 129; it reads KEEL.

It belongs to the selenoprotein M/F family. High expression levels observed in hepatopancreas, testis, ovaries and intestine. Also expressed in heart, stomach, gills, cranial ganglia, muscle and hematocytes.

It is found in the endoplasmic reticulum. Its function is as follows. May function as a thiol-disulfide oxidoreductase that participates in disulfide bond formation. Involved in the regulation of reproduction during the period of rapid gonadal development. The protein is Selenoprotein M of Eriocheir sinensis (Chinese mitten crab).